The chain runs to 224 residues: Small ribosomal subunit protein uS3c (224 aa).

Residues I43–K124 enclose the KH type-2 domain.

This sequence belongs to the universal ribosomal protein uS3 family. As to quaternary structure, part of the 30S ribosomal subunit.

It is found in the plastid. The protein resides in the chloroplast. The chain is Small ribosomal subunit protein uS3c (rps3) from Saccharum hybrid (Sugarcane).